The sequence spans 601 residues: Elongation factor 4 (601 aa).

A tr-type G domain is found at 6–188 (EHIRNFSIIA…EIVRKIPAPE (183 aa)). GTP is bound by residues 18–23 (DHGKST) and 135–138 (NKID).

It belongs to the TRAFAC class translation factor GTPase superfamily. Classic translation factor GTPase family. LepA subfamily.

Its subcellular location is the cell inner membrane. It catalyses the reaction GTP + H2O = GDP + phosphate + H(+). Its function is as follows. Required for accurate and efficient protein synthesis under certain stress conditions. May act as a fidelity factor of the translation reaction, by catalyzing a one-codon backward translocation of tRNAs on improperly translocated ribosomes. Back-translocation proceeds from a post-translocation (POST) complex to a pre-translocation (PRE) complex, thus giving elongation factor G a second chance to translocate the tRNAs correctly. Binds to ribosomes in a GTP-dependent manner. This is Elongation factor 4 from Hydrogenovibrio crunogenus (strain DSM 25203 / XCL-2) (Thiomicrospira crunogena).